Consider the following 372-residue polypeptide: MNKKRVVIKIGSSSLTNEKGEIDHKKLGDHVNALAMLHQHNFEVILVSSGAVAAGFRNLGYSSRPVTLKGKQASAAIGQGLLIHTYMDKFMEYNIRSAQLLLTRSDFSVQKRYKNATSTMLELLERGVIPIINENDTVAVDELTFGDNDMLSALVSGSIHAAQLIILTDIDGIYDKHPGKYASAMRYDTIDLITNDMIQETDVSGSKLGTGGMKSKLMAAKVAASLGVPVFIGKGVGVSKLLEIVNGHGQGTYVRSFRNKQIPIRKQWISLHSTLEGKVFIDDGATQALMHNGGSLLSAGVINTQGDFEDGDVVEVYNRRNLLGRGQVSCSSEELNAANTLKKAKQMTQIPAIEVIHRDSWVMVDQIKEEFQ.

K9 lines the ATP pocket. Substrate is bound by residues S49, D136, and N148. ATP contacts are provided by residues 168-169 (TD) and 210-216 (TGGMKSK). The region spanning 276-360 (EGKVFIDDGA…PAIEVIHRDS (85 aa)) is the PUA domain.

It belongs to the glutamate 5-kinase family.

It is found in the cytoplasm. It carries out the reaction L-glutamate + ATP = L-glutamyl 5-phosphate + ADP. It functions in the pathway amino-acid biosynthesis; L-proline biosynthesis; L-glutamate 5-semialdehyde from L-glutamate: step 1/2. Catalyzes the transfer of a phosphate group to glutamate to form L-glutamate 5-phosphate. This chain is Glutamate 5-kinase, found in Oceanobacillus iheyensis (strain DSM 14371 / CIP 107618 / JCM 11309 / KCTC 3954 / HTE831).